The following is a 93-amino-acid chain: Cell division topological specificity factor (93 aa).

It belongs to the MinE family.

Prevents the cell division inhibition by proteins MinC and MinD at internal division sites while permitting inhibition at polar sites. This ensures cell division at the proper site by restricting the formation of a division septum at the midpoint of the long axis of the cell. This is Cell division topological specificity factor from Halorhodospira halophila (strain DSM 244 / SL1) (Ectothiorhodospira halophila (strain DSM 244 / SL1)).